Consider the following 237-residue polypeptide: Ribonuclease PH (237 aa).

Phosphate-binding positions include Arg-86 and 124–126 (GTR).

The protein belongs to the RNase PH family. As to quaternary structure, homohexameric ring arranged as a trimer of dimers.

It catalyses the reaction tRNA(n+1) + phosphate = tRNA(n) + a ribonucleoside 5'-diphosphate. Phosphorolytic 3'-5' exoribonuclease that plays an important role in tRNA 3'-end maturation. Removes nucleotide residues following the 3'-CCA terminus of tRNAs; can also add nucleotides to the ends of RNA molecules by using nucleoside diphosphates as substrates, but this may not be physiologically important. Probably plays a role in initiation of 16S rRNA degradation (leading to ribosome degradation) during starvation. In Shewanella sp. (strain W3-18-1), this protein is Ribonuclease PH.